The following is a 764-amino-acid chain: Ribosomal protein S6 kinase alpha-6 (764 aa).

The tract at residues 1–24 (MLPFAPVEDPWDQEDMEVFGSTSS) is disordered. One can recognise a Protein kinase 1 domain in the interval 93–350 (FDLLKVLGQG…VEEVKRHAFF (258 aa)). ATP contacts are provided by residues 99-107 (LGQGSFGKV) and Lys125. Asp218 serves as the catalytic Proton acceptor. Phosphoserine is present on residues Ser252, Ser392, and Ser409. One can recognise an AGC-kinase C-terminal domain in the interval 351–420 (ASIDWNKLYK…VATSIAEEYK (70 aa)). In terms of domain architecture, Protein kinase 2 spans 446-706 (YELKEDIGIG…VLKHPWITQR (261 aa)). ATP is bound by residues 452–460 (IGIGSYSVC) and Lys475. Asp563 acts as the Proton acceptor in catalysis. Residue Thr601 is modified to Phosphothreonine.

The protein belongs to the protein kinase superfamily. AGC Ser/Thr protein kinase family. S6 kinase subfamily. Forms a complex with MAPK3/ERK1 but not with MAPK9 or MAPK14 in serum-starved cells. It depends on Mg(2+) as a cofactor. Phosphorylated at Ser-252, Ser-392, and Ser-409 in serum-starved cells.

The protein localises to the cytoplasm. It is found in the cytosol. The protein resides in the nucleus. The catalysed reaction is L-seryl-[protein] + ATP = O-phospho-L-seryl-[protein] + ADP + H(+). It catalyses the reaction L-threonyl-[protein] + ATP = O-phospho-L-threonyl-[protein] + ADP + H(+). Constitutively activated by phosphorylation at Ser-252, Ser-392, and Ser-409 in serum-starved cells. Does not require growth factor stimulation for significant kinase activity. Its function is as follows. Constitutively active serine/threonine-protein kinase that exhibits growth-factor-independent kinase activity and that may participate in p53/TP53-dependent cell growth arrest signaling and play an inhibitory role during embryogenesis. The chain is Ribosomal protein S6 kinase alpha-6 (Rps6ka6) from Mus musculus (Mouse).